Consider the following 132-residue polypeptide: Small ribosomal subunit protein uS8 (132 aa).

The protein belongs to the universal ribosomal protein uS8 family. In terms of assembly, part of the 30S ribosomal subunit. Contacts proteins S5 and S12.

One of the primary rRNA binding proteins, it binds directly to 16S rRNA central domain where it helps coordinate assembly of the platform of the 30S subunit. This chain is Small ribosomal subunit protein uS8, found in Clostridium botulinum (strain 657 / Type Ba4).